Here is a 106-residue protein sequence, read N- to C-terminus: Large ribosomal subunit protein uL24 (106 aa).

This sequence belongs to the universal ribosomal protein uL24 family. As to quaternary structure, part of the 50S ribosomal subunit.

Its function is as follows. One of two assembly initiator proteins, it binds directly to the 5'-end of the 23S rRNA, where it nucleates assembly of the 50S subunit. One of the proteins that surrounds the polypeptide exit tunnel on the outside of the subunit. This is Large ribosomal subunit protein uL24 from Verminephrobacter eiseniae (strain EF01-2).